We begin with the raw amino-acid sequence, 493 residues long: Glutamyl-tRNA(Gln) amidotransferase subunit A (493 aa).

Residues lysine 79 and serine 159 each act as charge relay system in the active site. The Acyl-ester intermediate role is filled by serine 183.

It belongs to the amidase family. GatA subfamily. In terms of assembly, heterotrimer of A, B and C subunits.

The catalysed reaction is L-glutamyl-tRNA(Gln) + L-glutamine + ATP + H2O = L-glutaminyl-tRNA(Gln) + L-glutamate + ADP + phosphate + H(+). Allows the formation of correctly charged Gln-tRNA(Gln) through the transamidation of misacylated Glu-tRNA(Gln) in organisms which lack glutaminyl-tRNA synthetase. The reaction takes place in the presence of glutamine and ATP through an activated gamma-phospho-Glu-tRNA(Gln). This is Glutamyl-tRNA(Gln) amidotransferase subunit A from Rhizobium etli (strain ATCC 51251 / DSM 11541 / JCM 21823 / NBRC 15573 / CFN 42).